A 124-amino-acid chain; its full sequence is Cytochrome c2 (124 aa).

At glutamine 1 the chain carries Pyrrolidone carboxylic acid. Heme c is bound by residues cysteine 16, cysteine 19, histidine 20, and methionine 85.

The protein belongs to the cytochrome c family. Binds 1 heme c group covalently per subunit.

Its subcellular location is the periplasm. In terms of biological role, cytochrome c2 is found mainly in purple, non-sulfur, photosynthetic bacteria where it functions as the electron donor to the oxidized bacteriochlorophyll in the photophosphorylation pathway. However, it may also have a role in the respiratory chain and is found in some non-photosynthetic bacteria. The sequence is that of Cytochrome c2 from Afifella marina (Rhodobium marinum).